A 60-amino-acid chain; its full sequence is Large ribosomal subunit protein uL30 (60 aa).

It belongs to the universal ribosomal protein uL30 family. As to quaternary structure, part of the 50S ribosomal subunit.

The chain is Large ribosomal subunit protein uL30 from Streptococcus equi subsp. equi (strain 4047).